Reading from the N-terminus, the 383-residue chain is Delta(12) fatty acid desaturase FAD2 (383 aa).

A disordered region spans residues 1 to 29; sequence MGAGGRMQDPTNGGNKTEPEPIQRVPHEK. Residues 17 to 29 show a composition bias toward basic and acidic residues; that stretch reads TEPEPIQRVPHEK. The next 2 helical transmembrane spans lie at 50 to 70 and 85 to 105; these read VIRS…LYYI and VAWP…WVIA. Positions 106 to 110 match the Histidine box-1 motif; that stretch reads HECGH. A helical transmembrane segment spans residues 118–138; that stretch reads WLDDTVGLVLHSFLLVPYFSW. The Histidine box-2 signature appears at 142-146; the sequence is HRRHH. Transmembrane regions (helical) follow at residues 180–200, 226–246, and 252–272; these read ILTL…FNVS, IFIS…LAMT, and VLTM…LITF. Positions 316 to 320 match the Histidine box-3 motif; sequence HVAHH.

Belongs to the fatty acid desaturase type 1 family. Expressed in leaves, flower buds and developing seeds.

It is found in the membrane. It functions in the pathway lipid metabolism; polyunsaturated fatty acid biosynthesis. Catalyzes the desaturation of oleic acid to linoleic acid. Introduces a double bond at position 12 of 16:1(9Z) and 18:1(9Z). The protein is Delta(12) fatty acid desaturase FAD2 of Calendula officinalis (Pot marigold).